A 37-amino-acid chain; its full sequence is MIDDQDLGFIANFLGIFIFALVIAYHYVTADPKYEAT.

At 1 to 7 (MIDDQDL) the chain is on the lumenal side. A helical transmembrane segment spans residues 8–28 (GFIANFLGIFIFALVIAYHYV). Over 29-37 (TADPKYEAT) the chain is Cytoplasmic.

Belongs to the OST4 family. In terms of assembly, component of the oligosaccharyltransferase (OST) complex.

The protein localises to the endoplasmic reticulum membrane. Its function is as follows. Subunit of the oligosaccharyl transferase (OST) complex that catalyzes the initial transfer of a defined glycan (Glc(3)Man(9)GlcNAc(2) in eukaryotes) from the lipid carrier dolichol-pyrophosphate to an asparagine residue within an Asn-X-Ser/Thr consensus motif in nascent polypeptide chains, the first step in protein N-glycosylation. N-glycosylation occurs cotranslationally and the complex associates with the Sec61 complex at the channel-forming translocon complex that mediates protein translocation across the endoplasmic reticulum (ER). All subunits are required for a maximal enzyme activity. In Arabidopsis thaliana (Mouse-ear cress), this protein is Dolichyl-diphosphooligosaccharide--protein glycosyltransferase subunit 4A (OST4A).